Here is a 156-residue protein sequence, read N- to C-terminus: Endoribonuclease YbeY (156 aa).

Residues His-122, His-126, and His-132 each coordinate Zn(2+).

This sequence belongs to the endoribonuclease YbeY family. Zn(2+) is required as a cofactor.

The protein localises to the cytoplasm. Its function is as follows. Single strand-specific metallo-endoribonuclease involved in late-stage 70S ribosome quality control and in maturation of the 3' terminus of the 16S rRNA. This is Endoribonuclease YbeY from Bacillus cereus (strain ATCC 14579 / DSM 31 / CCUG 7414 / JCM 2152 / NBRC 15305 / NCIMB 9373 / NCTC 2599 / NRRL B-3711).